The following is a 258-amino-acid chain: Deoxyribose-phosphate aldolase (258 aa).

Catalysis depends on D101, which acts as the Proton donor/acceptor. The Schiff-base intermediate with acetaldehyde role is filled by K166. The active-site Proton donor/acceptor is the K200.

Belongs to the DeoC/FbaB aldolase family. DeoC type 2 subfamily.

The protein resides in the cytoplasm. The catalysed reaction is 2-deoxy-D-ribose 5-phosphate = D-glyceraldehyde 3-phosphate + acetaldehyde. It functions in the pathway carbohydrate degradation; 2-deoxy-D-ribose 1-phosphate degradation; D-glyceraldehyde 3-phosphate and acetaldehyde from 2-deoxy-alpha-D-ribose 1-phosphate: step 2/2. In terms of biological role, catalyzes a reversible aldol reaction between acetaldehyde and D-glyceraldehyde 3-phosphate to generate 2-deoxy-D-ribose 5-phosphate. The polypeptide is Deoxyribose-phosphate aldolase (Haemophilus ducreyi (strain 35000HP / ATCC 700724)).